The primary structure comprises 158 residues: Transcription elongation factor GreA (158 aa).

A coiled-coil region spans residues 53-73 (EQQGFIEGRIKEIEAKLSNAQ).

The protein belongs to the GreA/GreB family.

In terms of biological role, necessary for efficient RNA polymerase transcription elongation past template-encoded arresting sites. The arresting sites in DNA have the property of trapping a certain fraction of elongating RNA polymerases that pass through, resulting in locked ternary complexes. Cleavage of the nascent transcript by cleavage factors such as GreA or GreB allows the resumption of elongation from the new 3'terminus. GreA releases sequences of 2 to 3 nucleotides. In Thioalkalivibrio sulfidiphilus (strain HL-EbGR7), this protein is Transcription elongation factor GreA.